The primary structure comprises 907 residues: Alanine--tRNA ligase (907 aa).

4 residues coordinate Zn(2+): histidine 581, histidine 585, cysteine 683, and histidine 687.

It belongs to the class-II aminoacyl-tRNA synthetase family. Requires Zn(2+) as cofactor.

Its subcellular location is the cytoplasm. It catalyses the reaction tRNA(Ala) + L-alanine + ATP = L-alanyl-tRNA(Ala) + AMP + diphosphate. Functionally, catalyzes the attachment of alanine to tRNA(Ala) in a two-step reaction: alanine is first activated by ATP to form Ala-AMP and then transferred to the acceptor end of tRNA(Ala). Also edits incorrectly charged Ser-tRNA(Ala) and Gly-tRNA(Ala) via its editing domain. The polypeptide is Alanine--tRNA ligase (Bdellovibrio bacteriovorus (strain ATCC 15356 / DSM 50701 / NCIMB 9529 / HD100)).